Here is a 138-residue protein sequence, read N- to C-terminus: Transcription antitermination protein NusB (138 aa).

The protein belongs to the NusB family.

Involved in transcription antitermination. Required for transcription of ribosomal RNA (rRNA) genes. Binds specifically to the boxA antiterminator sequence of the ribosomal RNA (rrn) operons. This is Transcription antitermination protein NusB from Limosilactobacillus reuteri (strain DSM 20016) (Lactobacillus reuteri).